Consider the following 867-residue polypeptide: MATVTEVLTEPFTAQGVTLKSGPIKVHQEELPAVELSDIPLPPPSKEPTEVLSIDKPTPDYHVPRDPRLIRLTGVHPFNVEPPLTALYDEGFLTSPELFYVRNHGPVPLVKDEDIPNWEISIEGLVEKPLVLNFRDILQQYDQITAPITLVCAGNRRKEQNVVRKTKGFSWGSAGLSTALWTGPMMADILRSAKPLRKAKYVCMEGADKLPNGYYGTSIKLNWAMDPNRGIMLAHKMNGEDLRPDHGRPLRAVVPGQIGGRSVKWLKKLILTDAPSDNWYHIYDNRVLPTMVSPEMSSSDPNWWRDDRYAIYDLNVNSSVVYPEHKEVLDLASAGPSYNVKGYAYAGGGRRITRVEISLDKGKSWRLANISYAEDKYRDFEGDLFGGRVHMSWRETCFCWCFWSLDIAIPELENTDAILVRAMDEALALQPRDMYWSVLGMMNNPWFRVTITKENGTLRFEHPTDPTGPGGWMERVKKAGGDLVNGYWGERQAGEEPTEPEPEKEINMKKEGVNRIIDLQEFKKNSSDEKPWFIVNGEVYDGTAFLEGHPGGAQSIISSAGIDVSEEFLAIHTQTAKAMMPDYHIGTMDKASLEALKNDNAPQSDEPRATFLQSKSWTKATLVKRTDVSWDTRIFTFQLQHDKQTLGLPIGQHLMIKVADPTSKEAIIRSYTPISDTNQEGTMDLLVKIYFDTPTVKGGKMTMALEKLALGSEIDCKGPTGRFEYLGNGKILVSGKERHVSSFKMICGGTGITPIFQVLRAVMQDKQDPTSCVVLDGNRQEEDILCRADLDAYEALDSKKCKVVHTLTKAPDSWTGRRGRISEDLLKEHAIPDGKSMVLICGPEAMEKSARKILLEQGWAESDLHFF.

Residues 38-58 (DIPLPPPSKEPTEVLSIDKPT) form a disordered region. C152 is a binding site for Mo-molybdopterin. Positions 514 to 589 (NRIIDLQEFK…MPDYHIGTMD (76 aa)) constitute a Cytochrome b5 heme-binding domain. 2 residues coordinate heme: H549 and H572. The region spanning 615 to 726 (KSWTKATLVK…KGPTGRFEYL (112 aa)) is the FAD-binding FR-type domain. FAD is bound by residues 669-672 (RSYT), 686-690 (LVKIY), F691, 700-702 (KMT), and T753. 837–846 (MVLICGPEAM) contributes to the NADP(+) binding site.

This sequence belongs to the nitrate reductase family. As to quaternary structure, homodimer. FAD serves as cofactor. It depends on heme as a cofactor. Requires Mo-molybdopterin as cofactor.

It carries out the reaction nitrite + NADP(+) + H2O = nitrate + NADPH + H(+). Its function is as follows. Nitrate reductase is a key enzyme involved in the first step of nitrate assimilation in plants, fungi and bacteria. In Aspergillus niger, this protein is Nitrate reductase [NADPH] (niaD).